Here is a 270-residue protein sequence, read N- to C-terminus: 3-phenylpropionate-dihydrodiol/cinnamic acid-dihydrodiol dehydrogenase (270 aa).

10–34 (FITGGGSGLGLALVERFIEEGAQVA) contributes to the NAD(+) binding site. Position 143 (Ser143) interacts with substrate. Tyr156 serves as the catalytic Proton acceptor.

It belongs to the short-chain dehydrogenases/reductases (SDR) family.

The enzyme catalyses 3-(cis-5,6-dihydroxycyclohexa-1,3-dien-1-yl)propanoate + NAD(+) = 3-(2,3-dihydroxyphenyl)propanoate + NADH + H(+). It catalyses the reaction (2E)-3-(cis-5,6-dihydroxycyclohexa-1,3-dien-1-yl)prop-2-enoate + NAD(+) = (2E)-3-(2,3-dihydroxyphenyl)prop-2-enoate + NADH + H(+). It functions in the pathway aromatic compound metabolism; 3-phenylpropanoate degradation. Functionally, converts 3-phenylpropionate-dihydrodiol (PP-dihydrodiol) and cinnamic acid-dihydrodiol (CI-dihydrodiol) into 3-(2,3-dihydroxylphenyl)propanoic acid (DHPP) and 2,3-dihydroxicinnamic acid (DHCI), respectively. The chain is 3-phenylpropionate-dihydrodiol/cinnamic acid-dihydrodiol dehydrogenase from Escherichia coli (strain ATCC 8739 / DSM 1576 / NBRC 3972 / NCIMB 8545 / WDCM 00012 / Crooks).